Here is a 144-residue protein sequence, read N- to C-terminus: Ribosomal RNA large subunit methyltransferase H (144 aa).

S-adenosyl-L-methionine is bound by residues L63, G92, and 111 to 116 (LSPMTF).

This sequence belongs to the RNA methyltransferase RlmH family. As to quaternary structure, homodimer.

The protein localises to the cytoplasm. It catalyses the reaction pseudouridine(1915) in 23S rRNA + S-adenosyl-L-methionine = N(3)-methylpseudouridine(1915) in 23S rRNA + S-adenosyl-L-homocysteine + H(+). Specifically methylates the pseudouridine at position 1915 (m3Psi1915) in 23S rRNA. In Synechococcus sp. (strain CC9605), this protein is Ribosomal RNA large subunit methyltransferase H.